Here is a 292-residue protein sequence, read N- to C-terminus: Malectin (292 aa).

Residues 1–28 (MLGAWAVEGTAVALLRLLLLLLPPAIRG) form the signal peptide. Residues 29–269 (PGLGVAGVAG…TPNPYASDNS (241 aa)) lie on the Lumenal side of the membrane. Tyr82, Tyr104, Tyr131, Phe132, and Asp201 together coordinate a carbohydrate. The disordered stretch occupies residues 221-265 (LQPHPGLEKKEEEEEEEEYDEGSNLKKQTNKNRVQSGPRTPNPYA). A compositionally biased stretch (acidic residues) spans 231 to 241 (EEEEEEEEYDE). The span at 245-265 (LKKQTNKNRVQSGPRTPNPYA) shows a compositional bias: polar residues. Asn268 is a glycosylation site (N-linked (GlcNAc...) asparagine). A helical transmembrane segment spans residues 270–290 (SLMFPILVAFGVFIPTLFCLC). Over 291 to 292 (RL) the chain is Cytoplasmic.

The protein belongs to the malectin family. Interacts with the oligosaccharyltransferase (OST) complex.

Its subcellular location is the endoplasmic reticulum membrane. Functionally, carbohydrate-binding protein with a strong ligand preference for Glc2-N-glycan. May play a role in the early steps of protein N-glycosylation. This is Malectin from Homo sapiens (Human).